Consider the following 436-residue polypeptide: Acetyl-CoA decarbonylase/synthase complex subunit delta 1 (436 aa).

Belongs to the CdhD family. Heterodimer of delta and gamma chains. The ACDS complex is made up of alpha, epsilon, beta, gamma and delta chains with a probable stoichiometry of (alpha(2)epsilon(2))(4)-beta(8)-(gamma(1)delta(1))(8) (Potential).

Its pathway is one-carbon metabolism; methanogenesis from acetate. Functionally, part of a complex that catalyzes the reversible cleavage of acetyl-CoA, allowing growth on acetate as sole source of carbon and energy. Probably maintains the overall quaternary structure of the ACDS complex. In Methanosarcina thermophila, this protein is Acetyl-CoA decarbonylase/synthase complex subunit delta 1 (cdhD1).